Here is a 2256-residue protein sequence, read N- to C-terminus: Death-inducer obliterator 1 (2256 aa).

At Met1 the chain carries N-acetylmethionine. Basic and acidic residues predominate over residues 1 to 25 (MDDKGHLSNEEAPKAIKPTSKEFRK). Residues 1–256 (MDDKGHLSNE…NPREAGKPKP (256 aa)) form a disordered region. Polar residues-rich tracts occupy residues 48-59 (SEQQPQQHNLSL) and 96-119 (EPTSSTVTDVETASEGSVESSSEI). Ser58 and Ser112 each carry phosphoserine. A compositionally biased stretch (basic and acidic residues) spans 128–142 (LGKEHPASSEKAKGG). Over residues 143–153 (EEEEDTSDSDS) the composition is skewed to acidic residues. Thr148 is subject to Phosphothreonine. Ser149 and Ser151 each carry phosphoserine. 2 short sequence motifs (nuclear localization signal) span residues 162-170 (QNRLRRKRE) and 182-190 (QNRLRKKRR). Residues 169–178 (REQEPVERSL) are compositionally biased toward basic and acidic residues. 2 stretches are compositionally biased toward basic and acidic residues: residues 206–216 (EQDRPLCKQEP) and 246–256 (ENPREAGKPKP). The PHD-type zinc finger occupies 265–319 (ALYCICRQPHNNRFMICCDRCEEWFHGDCVGISEARGRLLERNGEDYICPNCTIL). Disordered stretches follow at residues 481-535 (LASR…DDRR), 598-624 (RPWPSATLSGTSARQAGPTPMTAASKK), 641-668 (ANVPAASPAPGRLGPVSPAPSQPNSQIR), 778-822 (SRTK…PEKS), 856-970 (QVPS…TALS), 1011-1039 (AKPSSSPDPRYLSVPPSPSISESRSPPEG), and 1197-1218 (PSSAGELDKTDEKRTRLQQEEL). Polar residues predominate over residues 495-506 (ESSTPSWASDHN). Ser522 is subject to Phosphoserine. A TFIIS central domain is found at 667–787 (IRQNIRRSLK…SRTKLLNESK (121 aa)). The span at 778-788 (SRTKLLNESKK) shows a compositional bias: basic and acidic residues. The segment covering 797 to 812 (PDMEDSPPVSDSEEQQ) has biased composition (acidic residues). Phosphoserine is present on residues Ser802 and Ser806. 2 stretches are compositionally biased toward basic and acidic residues: residues 875 to 886 (SKKEDFKPRHDS) and 921 to 935 (QERKCFPESPGDSHP). Lys876 is covalently cross-linked (Glycyl lysine isopeptide (Lys-Gly) (interchain with G-Cter in SUMO2)). Phosphoserine is present on Ser886. Residues 937–962 (PSSLGGLSPSSASGGSGVVTTVTMSG) are compositionally biased toward low complexity. 3 positions are modified to phosphoserine: Ser1016, Ser1027, and Ser1035. Residues 1202-1215 (ELDKTDEKRTRLQQ) are compositionally biased toward basic and acidic residues. Phosphotyrosine is present on Tyr1239. The disordered stretch occupies residues 1245-1288 (DTAATSTTPPGSPPPPPPLPEPPVLKILSSLKPGSTSTVTAPTT). The residue at position 1252 (Thr1252) is a Phosphothreonine. Residues 1254–1267 (PGSPPPPPPLPEPP) are compositionally biased toward pro residues. Position 1256 is a phosphoserine (Ser1256). The span at 1279–1288 (STSTVTAPTT) shows a compositional bias: low complexity. Ser1307 carries the post-translational modification Phosphoserine. 4 disordered regions span residues 1320–1347 (KKSFEPSGKESVGSTLSPHQDSKAKGED), 1362–1421 (FGQF…VAYD), 1509–1609 (SDAL…EAKE), and 1630–2256 (QKCE…AAQA). Residues 1371–1387 (LEEEEEDDRPYDPEEEY) are compositionally biased toward acidic residues. Position 1514 is a phosphoserine (Ser1514). Over residues 1526-1546 (LFSQEQQAPDPSQGAPNTNHN) the composition is skewed to polar residues. Over residues 1547 to 1557 (LDSRQSRDPRQ) the composition is skewed to basic and acidic residues. A compositionally biased stretch (low complexity) spans 1649-1666 (PTAGDGAARPAPPRRVLL). Pro residues predominate over residues 1667–1679 (PTPPSTTFPPSFP). Residues 1699 to 1712 (TFMSQETSLGSSQY) are compositionally biased toward polar residues. Ser1726 is modified (phosphoserine). The span at 1783-1792 (FPGPRGPVPP) shows a compositional bias: pro residues. An Omega-N-methylarginine modification is found at Arg1848. Residues 1855–1869 (FEDRKDPHGEKREFQ) are compositionally biased toward basic and acidic residues. Asymmetric dimethylarginine is present on residues Arg1904, Arg1905, Arg1988, Arg1993, Arg2004, Arg2019, and Arg2035. 2 stretches are compositionally biased toward basic and acidic residues: residues 2081–2113 (EFREGKGHEYRSPAFEGRQRERFEAGSKEKPLD) and 2123–2246 (RQGR…EART).

In terms of assembly, interacts specifically (via PHD-type zinc finger) with histone H3 that is trimethylated at 'Lys-4' (H3K4me3), histone phosphorylation at 'Thr-3' or 'Thr-6' disrupts this binding and promotes translocation of DIDO1 from chromatin to the mitotic spindle during mitosis. As to expression, ubiquitous. Expressed at intermediate levels.

The protein resides in the cytoplasm. It is found in the nucleus. It localises to the cytoskeleton. Its subcellular location is the spindle. Required for early embryonic stem cell development. Putative transcription factor, weakly pro-apoptotic when overexpressed. The sequence is that of Death-inducer obliterator 1 (Dido1) from Mus musculus (Mouse).